A 399-amino-acid chain; its full sequence is Cell division protein FtsZ (399 aa).

Residues 18–22 (GGGVN), 105–107 (GTG), Glu136, Arg140, and Asp184 contribute to the GTP site. Residues 311 to 399 (GFDGGQPPSK…EELDVPDFLK (89 aa)) are disordered. Residues 388–399 (AAEELDVPDFLK) show a composition bias toward acidic residues.

Belongs to the FtsZ family. In terms of assembly, homodimer. Polymerizes to form a dynamic ring structure in a strictly GTP-dependent manner. Interacts directly with several other division proteins.

The protein resides in the cytoplasm. In terms of biological role, essential cell division protein that forms a contractile ring structure (Z ring) at the future cell division site. The regulation of the ring assembly controls the timing and the location of cell division. One of the functions of the FtsZ ring is to recruit other cell division proteins to the septum to produce a new cell wall between the dividing cells. Binds GTP and shows GTPase activity. The chain is Cell division protein FtsZ from Streptomyces coelicolor (strain ATCC BAA-471 / A3(2) / M145).